The sequence spans 48 residues: Small polypeptide DEVIL 19 (48 aa).

The tract at residues 13–44 (AFTSKCVSLVKEQRARLYILRRCATMLCCWYI) is required for DVL/RTFL small polypeptide activity. The chain crosses the membrane as a helical span at residues 25–42 (QRARLYILRRCATMLCCW).

This sequence belongs to the DVL/RTFL small polypeptides family.

It localises to the cell membrane. Its function is as follows. Small polypeptide acting as a regulatory molecule which coordinates cellular responses required for differentiation, growth and development, probably by restricting polar cell proliferation in lateral organs and coordinating socket cell recruitment and differentiation at trichome sites. The polypeptide is Small polypeptide DEVIL 19 (Arabidopsis thaliana (Mouse-ear cress)).